The sequence spans 736 residues: DNA topoisomerase 1 (736 aa).

The 112-residue stretch at 2 to 113 (KHLIIVESPA…SYPRIVFHEI (112 aa)) folds into the Toprim domain. Positions 8 and 82 each coordinate Mg(2+). A Topo IA-type catalytic domain is found at 129-552 (DMSKVNAQQA…DFYYPFMDKI (424 aa)). Positions 163–168 (SAGRVQ) are interaction with DNA. Y297 serves as the catalytic O-(5'-phospho-DNA)-tyrosine intermediate. 4 consecutive C4-type zinc fingers follow at residues 572–598 (CPKC…YPKC), 616–642 (CEKC…YPEC), 663–689 (CPEC…YPKC), and 702–725 (CEKC…CIKC).

It belongs to the type IA topoisomerase family. In terms of assembly, monomer. Mg(2+) serves as cofactor.

It catalyses the reaction ATP-independent breakage of single-stranded DNA, followed by passage and rejoining.. In terms of biological role, releases the supercoiling and torsional tension of DNA, which is introduced during the DNA replication and transcription, by transiently cleaving and rejoining one strand of the DNA duplex. Introduces a single-strand break via transesterification at a target site in duplex DNA. The scissile phosphodiester is attacked by the catalytic tyrosine of the enzyme, resulting in the formation of a DNA-(5'-phosphotyrosyl)-enzyme intermediate and the expulsion of a 3'-OH DNA strand. The free DNA strand then undergoes passage around the unbroken strand, thus removing DNA supercoils. Finally, in the religation step, the DNA 3'-OH attacks the covalent intermediate to expel the active-site tyrosine and restore the DNA phosphodiester backbone. The sequence is that of DNA topoisomerase 1 from Helicobacter pylori (strain ATCC 700392 / 26695) (Campylobacter pylori).